Reading from the N-terminus, the 162-residue chain is Serine-protein kinase RsbW (162 aa).

The protein belongs to the anti-sigma-factor family.

The catalysed reaction is L-seryl-[protein] + ATP = O-phospho-L-seryl-[protein] + ADP + H(+). It catalyses the reaction L-threonyl-[protein] + ATP = O-phospho-L-threonyl-[protein] + ADP + H(+). Its function is as follows. Negative regulator of sigma-B activity. Phosphorylates and inactivates its specific antagonist protein, RsbV. Upon phosphorylation of RsbV, RsbW is released and binds to sigma-B, thereby blocking its ability to form an RNA polymerase holoenzyme (E-sigma-B). The polypeptide is Serine-protein kinase RsbW (Halalkalibacterium halodurans (strain ATCC BAA-125 / DSM 18197 / FERM 7344 / JCM 9153 / C-125) (Bacillus halodurans)).